The chain runs to 391 residues: S-adenosylmethionine synthase (391 aa).

His19 is a binding site for ATP. A Mg(2+)-binding site is contributed by Asp21. Glu47 lines the K(+) pocket. L-methionine is bound by residues Glu60 and Gln103. The flexible loop stretch occupies residues 103 to 113 (QSPDIAQGVDR). ATP-binding positions include 168-170 (DGK), 236-237 (RF), Asp245, 251-252 (RK), Ala268, and Lys272. Residue Asp245 participates in L-methionine binding. Position 276 (Lys276) interacts with L-methionine.

It belongs to the AdoMet synthase family. In terms of assembly, homotetramer; dimer of dimers. Mg(2+) serves as cofactor. The cofactor is K(+).

The protein localises to the cytoplasm. The enzyme catalyses L-methionine + ATP + H2O = S-adenosyl-L-methionine + phosphate + diphosphate. The protein operates within amino-acid biosynthesis; S-adenosyl-L-methionine biosynthesis; S-adenosyl-L-methionine from L-methionine: step 1/1. Catalyzes the formation of S-adenosylmethionine (AdoMet) from methionine and ATP. The overall synthetic reaction is composed of two sequential steps, AdoMet formation and the subsequent tripolyphosphate hydrolysis which occurs prior to release of AdoMet from the enzyme. The sequence is that of S-adenosylmethionine synthase from Oleidesulfovibrio alaskensis (strain ATCC BAA-1058 / DSM 17464 / G20) (Desulfovibrio alaskensis).